We begin with the raw amino-acid sequence, 199 residues long: 7-methyl-GTP pyrophosphatase (199 aa).

Asp76 serves as the catalytic Proton acceptor.

Belongs to the Maf family. YceF subfamily. A divalent metal cation is required as a cofactor.

It localises to the cytoplasm. It carries out the reaction N(7)-methyl-GTP + H2O = N(7)-methyl-GMP + diphosphate + H(+). Functionally, nucleoside triphosphate pyrophosphatase that hydrolyzes 7-methyl-GTP (m(7)GTP). May have a dual role in cell division arrest and in preventing the incorporation of modified nucleotides into cellular nucleic acids. The sequence is that of 7-methyl-GTP pyrophosphatase (maf-2) from Brucella suis biovar 1 (strain 1330).